A 214-amino-acid polypeptide reads, in one-letter code: Ribonuclease HII (214 aa).

Residues 27–214 (SVVAGIDEAG…SPIKQMCAIV (188 aa)) enclose the RNase H type-2 domain. Residues aspartate 33, glutamate 34, and aspartate 126 each contribute to the a divalent metal cation site.

Belongs to the RNase HII family. It depends on Mn(2+) as a cofactor. Requires Mg(2+) as cofactor.

The protein resides in the cytoplasm. It catalyses the reaction Endonucleolytic cleavage to 5'-phosphomonoester.. Its function is as follows. Endonuclease that specifically degrades the RNA of RNA-DNA hybrids. The protein is Ribonuclease HII (rnhB) of Chlamydia pneumoniae (Chlamydophila pneumoniae).